The primary structure comprises 280 residues: 4-hydroxy-3-methylbut-2-enyl diphosphate reductase (280 aa).

Cys-12 contacts [4Fe-4S] cluster. (2E)-4-hydroxy-3-methylbut-2-enyl diphosphate contacts are provided by His-40 and His-72. Positions 40 and 72 each coordinate dimethylallyl diphosphate. Positions 40 and 72 each coordinate isopentenyl diphosphate. Cys-94 serves as a coordination point for [4Fe-4S] cluster. Residue His-122 coordinates (2E)-4-hydroxy-3-methylbut-2-enyl diphosphate. His-122 is a dimethylallyl diphosphate binding site. Residue His-122 coordinates isopentenyl diphosphate. Residue Glu-124 is the Proton donor of the active site. Thr-160 serves as a coordination point for (2E)-4-hydroxy-3-methylbut-2-enyl diphosphate. Cys-188 contacts [4Fe-4S] cluster. Ser-216, Asn-218, and Ser-260 together coordinate (2E)-4-hydroxy-3-methylbut-2-enyl diphosphate. Residues Ser-216, Asn-218, and Ser-260 each coordinate dimethylallyl diphosphate. Residues Ser-216, Asn-218, and Ser-260 each coordinate isopentenyl diphosphate.

This sequence belongs to the IspH family. Requires [4Fe-4S] cluster as cofactor.

The enzyme catalyses isopentenyl diphosphate + 2 oxidized [2Fe-2S]-[ferredoxin] + H2O = (2E)-4-hydroxy-3-methylbut-2-enyl diphosphate + 2 reduced [2Fe-2S]-[ferredoxin] + 2 H(+). It carries out the reaction dimethylallyl diphosphate + 2 oxidized [2Fe-2S]-[ferredoxin] + H2O = (2E)-4-hydroxy-3-methylbut-2-enyl diphosphate + 2 reduced [2Fe-2S]-[ferredoxin] + 2 H(+). Its pathway is isoprenoid biosynthesis; dimethylallyl diphosphate biosynthesis; dimethylallyl diphosphate from (2E)-4-hydroxy-3-methylbutenyl diphosphate: step 1/1. It participates in isoprenoid biosynthesis; isopentenyl diphosphate biosynthesis via DXP pathway; isopentenyl diphosphate from 1-deoxy-D-xylulose 5-phosphate: step 6/6. Its function is as follows. Catalyzes the conversion of 1-hydroxy-2-methyl-2-(E)-butenyl 4-diphosphate (HMBPP) into a mixture of isopentenyl diphosphate (IPP) and dimethylallyl diphosphate (DMAPP). Acts in the terminal step of the DOXP/MEP pathway for isoprenoid precursor biosynthesis. The sequence is that of 4-hydroxy-3-methylbut-2-enyl diphosphate reductase from Trichlorobacter lovleyi (strain ATCC BAA-1151 / DSM 17278 / SZ) (Geobacter lovleyi).